The chain runs to 68 residues: Venom peptide 3 (68 aa).

An N-terminal signal peptide occupies residues 1-25 (MTKQSIVIVLFAAIAMMACLQRVTA). 5 AXPX repeats span residues 25-28 (AEPA), 33-36 (AAPI), 37-40 (AEPY), 41-44 (ANPE), and 47-50 (ASPE). The propeptide occupies 26–51 (EPAPEPIAAPIAEPYANPEAIASPEA). Leucine amide is present on Leu-65.

Expressed by the venom gland.

The protein resides in the secreted. It is found in the target cell membrane. Antimicrobial peptide with strong activity against the fungi B.cinerea (MIC=5 uM) and C.albicans (MIC=33 uM), and no activity against the Gram-negative bacterium E.coli (MIC&gt;200 uM) and the Gram-positive bacterium S.aureus (MIC&gt;200 uM). Shows cytolytic activity against insect cell lines. Has no hemolytic activity against human erythrocytes. In vivo, peptide injection in the vicinity of the head and thorax of lepidopteran larvae induces feeding disorder that lasts one or two days before recovering. The sequence is that of Venom peptide 3 from Orancistrocerus drewseni (Solitary wasp).